Reading from the N-terminus, the 311-residue chain is MSTREGRLKDTSIRLSEATAADFFALLKPRVMALAVFTAFVGLMVAPGAVNPVIAVIAIAAIAIGAGAAGALNMWYDADIDALMSRTSKRPVPSGRVTPGEALGFGLVLSALSVMTLGVLVGWLAASLLAFTIFFYIVIYTMWLKRSTPQNIVIGGAAGALPPVIGWAAATGAVGVESLVLFLIIFLWTPPHFWALALFKVGDYAAAGIPMMPNVAGPASTRRQILAYALLLAPVGVLPWAFGFTSGYYGIASAALGVGFIWHSWKVRAASETELKPAKALFAYSIVYLFAVFAALLADTIAMRALMSVGA.

9 helical membrane passes run 31–51 (VMAL…GAVN), 52–72 (PVIA…AGAL), 97–117 (VTPG…VMTL), 119–139 (VLVG…YIVI), 152–172 (IVIG…AATG), 179–199 (LVLF…LALF), 225–245 (ILAY…FGFT), 247–267 (GYYG…SWKV), and 281–301 (LFAY…ADTI).

It belongs to the UbiA prenyltransferase family. Protoheme IX farnesyltransferase subfamily.

Its subcellular location is the cell inner membrane. The catalysed reaction is heme b + (2E,6E)-farnesyl diphosphate + H2O = Fe(II)-heme o + diphosphate. Its pathway is porphyrin-containing compound metabolism; heme O biosynthesis; heme O from protoheme: step 1/1. Converts heme B (protoheme IX) to heme O by substitution of the vinyl group on carbon 2 of heme B porphyrin ring with a hydroxyethyl farnesyl side group. This chain is Protoheme IX farnesyltransferase 1, found in Mesorhizobium japonicum (strain LMG 29417 / CECT 9101 / MAFF 303099) (Mesorhizobium loti (strain MAFF 303099)).